Here is a 171-residue protein sequence, read N- to C-terminus: ATP synthase subunit b (171 aa).

Residues 12–34 (FALNLNLFETNVINLAVVAFGLY) form a helical membrane-spanning segment.

This sequence belongs to the ATPase B chain family. As to quaternary structure, F-type ATPases have 2 components, F(1) - the catalytic core - and F(0) - the membrane proton channel. F(1) has five subunits: alpha(3), beta(3), gamma(1), delta(1), epsilon(1). F(0) has four main subunits: a(1), b(1), b'(1) and c(10-14). The alpha and beta chains form an alternating ring which encloses part of the gamma chain. F(1) is attached to F(0) by a central stalk formed by the gamma and epsilon chains, while a peripheral stalk is formed by the delta, b and b' chains.

The protein resides in the cellular thylakoid membrane. Its function is as follows. F(1)F(0) ATP synthase produces ATP from ADP in the presence of a proton or sodium gradient. F-type ATPases consist of two structural domains, F(1) containing the extramembraneous catalytic core and F(0) containing the membrane proton channel, linked together by a central stalk and a peripheral stalk. During catalysis, ATP synthesis in the catalytic domain of F(1) is coupled via a rotary mechanism of the central stalk subunits to proton translocation. Functionally, component of the F(0) channel, it forms part of the peripheral stalk, linking F(1) to F(0). The chain is ATP synthase subunit b from Prochlorococcus marinus (strain SARG / CCMP1375 / SS120).